The primary structure comprises 280 residues: Shikimate dehydrogenase (NADP(+)) (280 aa).

Shikimate contacts are provided by residues 20–22 and Thr67; that span reads TLS. Catalysis depends on Lys71, which acts as the Proton acceptor. Shikimate is bound by residues Asn92 and Asp107. Residues 131–135, 154–159, and Leu224 each bind NADP(+); these read GAGGA and NRTIDK. Tyr226 provides a ligand contact to shikimate. Gly247 serves as a coordination point for NADP(+).

Belongs to the shikimate dehydrogenase family. In terms of assembly, homodimer.

It catalyses the reaction shikimate + NADP(+) = 3-dehydroshikimate + NADPH + H(+). The protein operates within metabolic intermediate biosynthesis; chorismate biosynthesis; chorismate from D-erythrose 4-phosphate and phosphoenolpyruvate: step 4/7. Its function is as follows. Involved in the biosynthesis of the chorismate, which leads to the biosynthesis of aromatic amino acids. Catalyzes the reversible NADPH linked reduction of 3-dehydroshikimate (DHSA) to yield shikimate (SA). This Carboxydothermus hydrogenoformans (strain ATCC BAA-161 / DSM 6008 / Z-2901) protein is Shikimate dehydrogenase (NADP(+)).